Here is a 415-residue protein sequence, read N- to C-terminus: Tyrosine--tRNA ligase (415 aa).

Y34 contributes to the L-tyrosine binding site. The 'HIGH' region motif lies at 39–48 (PTSDSLTVGH). Y164 and Q168 together coordinate L-tyrosine. A 'KMSKS' region motif is present at residues 225-229 (KFGKS). Residue K228 coordinates ATP. One can recognise an S4 RNA-binding domain in the interval 348-414 (IPLSEALVKT…GKKNNSLIIL (67 aa)).

The protein belongs to the class-I aminoacyl-tRNA synthetase family. TyrS type 1 subfamily. Homodimer.

Its subcellular location is the cytoplasm. It carries out the reaction tRNA(Tyr) + L-tyrosine + ATP = L-tyrosyl-tRNA(Tyr) + AMP + diphosphate + H(+). Functionally, catalyzes the attachment of tyrosine to tRNA(Tyr) in a two-step reaction: tyrosine is first activated by ATP to form Tyr-AMP and then transferred to the acceptor end of tRNA(Tyr). The protein is Tyrosine--tRNA ligase of Phytoplasma australiense.